The sequence spans 136 residues: NADH-quinone oxidoreductase subunit A (136 aa).

3 helical membrane-spanning segments follow: residues 20 to 40 (LAVYAVLVAAFVAVQLFVAWW), 70 to 90 (VPFYLVAIFFLIFDMEGAYIL), and 99 to 119 (LGWAGWLQMSFFIGLLLVGLV).

It belongs to the complex I subunit 3 family. NDH-1 is composed of 14 different subunits. Subunits NuoA, H, J, K, L, M, N constitute the membrane sector of the complex.

It is found in the cell inner membrane. The catalysed reaction is a quinone + NADH + 5 H(+)(in) = a quinol + NAD(+) + 4 H(+)(out). Functionally, NDH-1 shuttles electrons from NADH, via FMN and iron-sulfur (Fe-S) centers, to quinones in the respiratory chain. The immediate electron acceptor for the enzyme in this species is believed to be ubiquinone. Couples the redox reaction to proton translocation (for every two electrons transferred, four hydrogen ions are translocated across the cytoplasmic membrane), and thus conserves the redox energy in a proton gradient. The chain is NADH-quinone oxidoreductase subunit A from Syntrophobacter fumaroxidans (strain DSM 10017 / MPOB).